The primary structure comprises 581 residues: Oligo-1,6-glucosidase IMA5 (581 aa).

The Nucleophile role is filled by Asp-210. The Proton donor role is filled by Glu-272.

This sequence belongs to the glycosyl hydrolase 13 family.

It catalyses the reaction Hydrolysis of (1-&gt;6)-alpha-D-glucosidic linkages in some oligosaccharides produced from starch and glycogen by alpha-amylase, and in isomaltose.. Its function is as follows. Alpha-glucosidase with specificity for isomaltose, maltose, and palatinose. This chain is Oligo-1,6-glucosidase IMA5 (IMA5), found in Saccharomyces cerevisiae (strain ATCC 204508 / S288c) (Baker's yeast).